The following is a 245-amino-acid chain: 4-hydroxy-tetrahydrodipicolinate reductase (245 aa).

NAD(+)-binding positions include 7–12 (GAKGKV), 75–77 (GTT), and 102–105 (APNF). His-132 serves as the catalytic Proton donor/acceptor. Position 133 (His-133) interacts with (S)-2,3,4,5-tetrahydrodipicolinate. The Proton donor role is filled by Lys-136. 142–143 (GT) is a (S)-2,3,4,5-tetrahydrodipicolinate binding site.

Belongs to the DapB family.

The protein resides in the cytoplasm. The catalysed reaction is (S)-2,3,4,5-tetrahydrodipicolinate + NAD(+) + H2O = (2S,4S)-4-hydroxy-2,3,4,5-tetrahydrodipicolinate + NADH + H(+). It catalyses the reaction (S)-2,3,4,5-tetrahydrodipicolinate + NADP(+) + H2O = (2S,4S)-4-hydroxy-2,3,4,5-tetrahydrodipicolinate + NADPH + H(+). It participates in amino-acid biosynthesis; L-lysine biosynthesis via DAP pathway; (S)-tetrahydrodipicolinate from L-aspartate: step 4/4. In terms of biological role, catalyzes the conversion of 4-hydroxy-tetrahydrodipicolinate (HTPA) to tetrahydrodipicolinate. In Mycobacterium bovis (strain ATCC BAA-935 / AF2122/97), this protein is 4-hydroxy-tetrahydrodipicolinate reductase.